The following is a 309-amino-acid chain: Formamidopyrimidine-DNA glycosylase (309 aa).

Proline 2 serves as the catalytic Schiff-base intermediate with DNA. The active-site Proton donor is the glutamate 3. The active-site Proton donor; for beta-elimination activity is the lysine 56. Residues histidine 106 and arginine 129 each contribute to the DNA site. An FPG-type zinc finger spans residues 271–305; the sequence is NVYGRQGNACPHCESTLENIKLNGRASVYCPLCQP. Arginine 295 serves as the catalytic Proton donor; for delta-elimination activity.

The protein belongs to the FPG family. Monomer. It depends on Zn(2+) as a cofactor.

It carries out the reaction Hydrolysis of DNA containing ring-opened 7-methylguanine residues, releasing 2,6-diamino-4-hydroxy-5-(N-methyl)formamidopyrimidine.. The enzyme catalyses 2'-deoxyribonucleotide-(2'-deoxyribose 5'-phosphate)-2'-deoxyribonucleotide-DNA = a 3'-end 2'-deoxyribonucleotide-(2,3-dehydro-2,3-deoxyribose 5'-phosphate)-DNA + a 5'-end 5'-phospho-2'-deoxyribonucleoside-DNA + H(+). Involved in base excision repair of DNA damaged by oxidation or by mutagenic agents. Acts as a DNA glycosylase that recognizes and removes damaged bases. Has a preference for oxidized purines, such as 7,8-dihydro-8-oxoguanine (8-oxoG). Has AP (apurinic/apyrimidinic) lyase activity and introduces nicks in the DNA strand. Cleaves the DNA backbone by beta-delta elimination to generate a single-strand break at the site of the removed base with both 3'- and 5'-phosphates. This is Formamidopyrimidine-DNA glycosylase from Psychrobacter arcticus (strain DSM 17307 / VKM B-2377 / 273-4).